The primary structure comprises 385 residues: Flap endonuclease 1 (385 aa).

The N-domain stretch occupies residues 1–104 (MGILGLSKLI…GELAKRAERR (104 aa)). Asp-34 contributes to the Mg(2+) binding site. Residues Arg-47 and Arg-70 each contribute to the DNA site. 5 residues coordinate Mg(2+): Asp-86, Glu-158, Glu-160, Asp-179, and Asp-181. Residues 122–253 (GIEKFNRRLV…KRAIELINTY (132 aa)) form an I-domain region. Glu-158 is a binding site for DNA. Positions 231 and 233 each coordinate DNA. Residue Asp-233 coordinates Mg(2+). Positions 336-344 (TQVRLDSFF) are interaction with PCNA. Positions 346–385 (TLPSTPNATNAAKRKAEEAKKSANNKKAKTSGGGRGRRPK) are disordered. Over residues 368-385 (ANNKKAKTSGGGRGRRPK) the composition is skewed to basic residues.

This sequence belongs to the XPG/RAD2 endonuclease family. FEN1 subfamily. As to quaternary structure, interacts with PCNA. Three molecules of FEN1 bind to one PCNA trimer with each molecule binding to one PCNA monomer. PCNA stimulates the nuclease activity without altering cleavage specificity. It depends on Mg(2+) as a cofactor. Phosphorylated. Phosphorylation upon DNA damage induces relocalization to the nuclear plasma.

The protein resides in the nucleus. It is found in the nucleolus. Its subcellular location is the nucleoplasm. It localises to the mitochondrion. Its function is as follows. Structure-specific nuclease with 5'-flap endonuclease and 5'-3' exonuclease activities involved in DNA replication and repair. During DNA replication, cleaves the 5'-overhanging flap structure that is generated by displacement synthesis when DNA polymerase encounters the 5'-end of a downstream Okazaki fragment. It enters the flap from the 5'-end and then tracks to cleave the flap base, leaving a nick for ligation. Also involved in the long patch base excision repair (LP-BER) pathway, by cleaving within the apurinic/apyrimidinic (AP) site-terminated flap. Acts as a genome stabilization factor that prevents flaps from equilibrating into structures that lead to duplications and deletions. Also possesses 5'-3' exonuclease activity on nicked or gapped double-stranded DNA, and exhibits RNase H activity. Also involved in replication and repair of rDNA and in repairing mitochondrial DNA. The polypeptide is Flap endonuclease 1 (Drosophila melanogaster (Fruit fly)).